Consider the following 122-residue polypeptide: Small ribosomal subunit protein bS16 (122 aa).

The protein belongs to the bacterial ribosomal protein bS16 family.

This is Small ribosomal subunit protein bS16 from Prochlorococcus marinus (strain MIT 9313).